We begin with the raw amino-acid sequence, 298 residues long: MESENIISAADKARILAEALPYIRRFSGSVAVIKYGGNAMTEPALKEGFARDVVLLKLVGIHPVIVHGGGPQINAMLEKVGKKGEFVQGMRVTDKEAMDIVEMVLGGHVNKEIVSMINTYGGHAVGVSGRDDHFIKAKKLLIDTPEQNGVDIGQVGTVESIDTGLVKGLIERGYIPVVAPVGVGEKGEAFNINADLVAGKLAEELNAEKLLMMTNIAGVMDKMGNLLTKLTPKRIDELIADGTLYGGMLPKIASAVEAAVNGVKATHIIDGRLPNALLLEIFTDAGIGSMILGGGEDA.

Substrate-binding positions include 69 to 70 (GG), R91, and N191.

This sequence belongs to the acetylglutamate kinase family. ArgB subfamily.

It localises to the cytoplasm. It catalyses the reaction N-acetyl-L-glutamate + ATP = N-acetyl-L-glutamyl 5-phosphate + ADP. It functions in the pathway amino-acid biosynthesis; L-arginine biosynthesis; N(2)-acetyl-L-ornithine from L-glutamate: step 2/4. Functionally, catalyzes the ATP-dependent phosphorylation of N-acetyl-L-glutamate. This chain is Acetylglutamate kinase, found in Neisseria meningitidis serogroup C / serotype 2a (strain ATCC 700532 / DSM 15464 / FAM18).